Here is a 258-residue protein sequence, read N- to C-terminus: Microtubule-associated protein RP/EB family member 1 (258 aa).

The region spanning 14–116 (NLSRHDMLAW…FVQWFKKFFD (103 aa)) is the Calponin-homology (CH) domain. Residues 175 to 245 (KKAAGDDESA…LYATDEGFVI (71 aa)) enclose the EB1 C-terminal domain.

The protein belongs to the MAPRE family.

It is found in the cytoplasm. Its subcellular location is the cytoskeleton. The protein localises to the microtubule organizing center. It localises to the centrosome. The protein resides in the golgi apparatus. It is found in the spindle. Its subcellular location is the spindle pole. Plus-end tracking protein (+TIP) that binds to the plus-end of microtubules and regulates the dynamics of the microtubule cytoskeleton. Promotes cytoplasmic microtubule nucleation and elongation. Involved in mitotic spindle positioning by stabilizing microtubules and promoting dynamic connection between astral microtubules and the cortex during mitotic chromosome segregation. The chain is Microtubule-associated protein RP/EB family member 1 (MAPRE1) from Gallus gallus (Chicken).